The chain runs to 373 residues: Partitioning protein REP1 (373 aa).

An interaction with REP2 region spans residues 1–76 (MNGERLLACI…EKELDWPDPA (76 aa)). Residues 1–129 (MNGERLLACI…LNRRGKGIRR (129 aa)) form an interaction with REP2 and self-association region. The segment at 349–373 (FEEHWKPVDVEVEFRCKFKERKVDG) is nuclear localization.

As to quaternary structure, interacts with REP2.

The protein resides in the nucleus. Its function is as follows. Part of the plasmid partitioning system, which ensures the equal distribution of replicated plasmid molecules to daughter cells. The plasmids exist as well-organized plasmid foci within the nucleus that stay together throughout the cell-cycle and act as entity during segregation, effetively reducing copy number to one. Plasmid partitioning requires the proteins REP1, REP2, and a cis-acting locus STB (REP3). REP1-REP2 stably associate with CSE4-containing chromatin at STB during S-phase, marking the locus with a centromeric tag, and thereby probably catching mitotic spindle microtubules to the plasmid cluster and coupling plasmid segregation to chromosome segregation. REP1-REP2 are required to recruit the cohesin complex to the STB locus for pairing of the replicated plasmid cluster, a prerequisite for successful plasmid segregation. REP1-REP2 also negatively regulate expression of site-specific recombinase FLP and of RAF1. The polypeptide is Partitioning protein REP1 (REP1) (Saccharomyces cerevisiae (strain ATCC 204508 / S288c) (Baker's yeast)).